A 308-amino-acid polypeptide reads, in one-letter code: tRNA dimethylallyltransferase 2 (308 aa).

Residue 13–20 coordinates ATP; it reads GPTASGKT. 15–20 is a substrate binding site; the sequence is TASGKT. Residues 38–41 are interaction with substrate tRNA; sequence DSRQ.

It belongs to the IPP transferase family. In terms of assembly, monomer. The cofactor is Mg(2+).

The enzyme catalyses adenosine(37) in tRNA + dimethylallyl diphosphate = N(6)-dimethylallyladenosine(37) in tRNA + diphosphate. In terms of biological role, catalyzes the transfer of a dimethylallyl group onto the adenine at position 37 in tRNAs that read codons beginning with uridine, leading to the formation of N6-(dimethylallyl)adenosine (i(6)A). In Bacteroides fragilis (strain YCH46), this protein is tRNA dimethylallyltransferase 2.